The following is a 157-amino-acid chain: 6,7-dimethyl-8-ribityllumazine synthase (157 aa).

Residues Phe-22, 57–59 (AYE), and 81–83 (TVI) contribute to the 5-amino-6-(D-ribitylamino)uracil site. 86 to 87 (GT) is a (2S)-2-hydroxy-3-oxobutyl phosphate binding site. His-89 serves as the catalytic Proton donor. Phe-114 contacts 5-amino-6-(D-ribitylamino)uracil. Arg-128 provides a ligand contact to (2S)-2-hydroxy-3-oxobutyl phosphate.

The protein belongs to the DMRL synthase family. In terms of assembly, forms an icosahedral capsid composed of 60 subunits, arranged as a dodecamer of pentamers.

It catalyses the reaction (2S)-2-hydroxy-3-oxobutyl phosphate + 5-amino-6-(D-ribitylamino)uracil = 6,7-dimethyl-8-(1-D-ribityl)lumazine + phosphate + 2 H2O + H(+). Its pathway is cofactor biosynthesis; riboflavin biosynthesis; riboflavin from 2-hydroxy-3-oxobutyl phosphate and 5-amino-6-(D-ribitylamino)uracil: step 1/2. Catalyzes the formation of 6,7-dimethyl-8-ribityllumazine by condensation of 5-amino-6-(D-ribitylamino)uracil with 3,4-dihydroxy-2-butanone 4-phosphate. This is the penultimate step in the biosynthesis of riboflavin. In Haemophilus influenzae (strain 86-028NP), this protein is 6,7-dimethyl-8-ribityllumazine synthase.